Here is an 83-residue protein sequence, read N- to C-terminus: Putative membrane protein insertion efficiency factor (83 aa).

The protein belongs to the UPF0161 family.

It is found in the cell membrane. Could be involved in insertion of integral membrane proteins into the membrane. The protein is Putative membrane protein insertion efficiency factor of Staphylococcus saprophyticus subsp. saprophyticus (strain ATCC 15305 / DSM 20229 / NCIMB 8711 / NCTC 7292 / S-41).